Reading from the N-terminus, the 353-residue chain is DNA integrity scanning protein DisA (353 aa).

In terms of domain architecture, DAC spans 6-144 (DKELMNILKI…GGIKYVLRDS (139 aa)). ATP is bound by residues G73, L91, and 104-108 (TRHRT).

Belongs to the DisA family. As to quaternary structure, homooctamer. It depends on Mg(2+) as a cofactor.

The catalysed reaction is 2 ATP = 3',3'-c-di-AMP + 2 diphosphate. Its function is as follows. Participates in a DNA-damage check-point that is active prior to asymmetric division when DNA is damaged. DisA forms globular foci that rapidly scan along the chromosomes during sporulation, searching for lesions. When a lesion is present, DisA pauses at the lesion site. This triggers a cellular response that culminates in a temporary block in sporulation initiation. In terms of biological role, also has diadenylate cyclase activity, catalyzing the condensation of 2 ATP molecules into cyclic di-AMP (c-di-AMP). c-di-AMP acts as a signaling molecule that couples DNA integrity with progression of sporulation. The rise in c-di-AMP level generated by DisA while scanning the chromosome, operates as a positive signal that advances sporulation; upon encountering a lesion, the DisA focus arrests at the damaged site and halts c-di-AMP synthesis. The chain is DNA integrity scanning protein DisA from Clostridium botulinum (strain Okra / Type B1).